A 144-amino-acid chain; its full sequence is Grifin (144 aa).

In terms of domain architecture, Galectin spans 5–133 (SKAFCAGGLA…DHCLAQVELA (129 aa)). Serine 138 carries the post-translational modification Phosphoserine.

As to quaternary structure, homodimer. In terms of tissue distribution, not detected in lens.

This is Grifin (GRIFIN) from Homo sapiens (Human).